The sequence spans 568 residues: Zinc finger protein 76 (568 aa).

Lys24 participates in a covalent cross-link: Glycyl lysine isopeptide (Lys-Gly) (interchain with G-Cter in SUMO2). Repeat copies occupy residues 34 to 45 (IQLEDGTTAYIH), 62 to 73 (VQLEDGSMAYIH), and 88 to 99 (VQLEDGSTAYIH). Residues 34-99 (IQLEDGTTAY…LEDGSTAYIH (66 aa)) are 3 X 12 AA approximate repeats. C2H2-type zinc fingers lie at residues 165–189 (FRCG…ERAH), 195–219 (YRCD…VRTH), 225–249 (YKCP…VRTH), 255–279 (FRCP…VRTH), 285–309 (YTCP…VRIH), 315–339 (YVCT…HVVH), and 345–368 (YTCS…RSAH). The interval 365–401 (RSAHGELEATEESEQALYEQQQLEAASAAEESPSPKP) is disordered. Residues 379–396 (QALYEQQQLEAASAAEES) show a composition bias toward low complexity.

It belongs to the krueppel C2H2-type zinc-finger protein family.

The protein resides in the nucleus. Functionally, may be involved in transcriptional regulation. This Rattus norvegicus (Rat) protein is Zinc finger protein 76 (Znf76).